Consider the following 268-residue polypeptide: Putative S-adenosyl-L-methionine-dependent methyltransferase MAP_0663 (268 aa).

Residues Asp-124 and 153-154 each bind S-adenosyl-L-methionine; that span reads DL.

The protein belongs to the UPF0677 family.

Functionally, exhibits S-adenosyl-L-methionine-dependent methyltransferase activity. This Mycolicibacterium paratuberculosis (strain ATCC BAA-968 / K-10) (Mycobacterium paratuberculosis) protein is Putative S-adenosyl-L-methionine-dependent methyltransferase MAP_0663.